The primary structure comprises 113 residues: Nitrogenase-stabilizing/protective protein NifW (113 aa).

This sequence belongs to the NifW family. Homotrimer; associates with NifD.

May protect the nitrogenase Fe-Mo protein from oxidative damage. The polypeptide is Nitrogenase-stabilizing/protective protein NifW (Polaromonas naphthalenivorans (strain CJ2)).